The following is a 132-amino-acid chain: Dormancy-associated protein 1 (132 aa).

A disordered region spans residues 53–76 (MPAAVSPGTPTTPTTPTTPRKDNV). Over residues 61 to 70 (TPTTPTTPTT) the composition is skewed to low complexity. A Phosphothreonine modification is found at threonine 64.

This sequence belongs to the DRM1/ARP family. As to expression, isoform 1: Expressed mainly in the low bolt. Isoform 2: Expressed mainly in the low bolt. Detected in flowers. Isoform 4: Expressed mainly in the low bolt. Isoform 5: Expressed mainly in the 6 days old seedlings. Detected in 16 days old seedlings, axil, low bolt and floral samples, but only barely in leaves and top bolt.

The chain is Dormancy-associated protein 1 from Arabidopsis thaliana (Mouse-ear cress).